The chain runs to 707 residues: Serine/threonine protein kinase UL97 (707 aa).

The span at 1–14 (MSSALRSRARSASL) shows a compositional bias: low complexity. Disordered regions lie at residues 1-32 (MSSA…PSRA), 113-147 (DGEK…DGYH), 176-199 (FTGG…PLRP), and 231-264 (ESQD…EADS). The span at 113-127 (DGEKEDAASDKENQR) shows a compositional bias: basic and acidic residues. Over residues 178-188 (GGSDPSDSVSG) the composition is skewed to low complexity. Aspartate 456 serves as the catalytic Proton acceptor.

It belongs to the protein kinase superfamily. Tyr protein kinase family. HCMV ganciclovir subfamily. Interacts with UL83. In terms of processing, autophosphorylates on serine and threonine residues.

The protein resides in the virion. The enzyme catalyses L-seryl-[protein] + ATP = O-phospho-L-seryl-[protein] + ADP + H(+). It catalyses the reaction L-threonyl-[protein] + ATP = O-phospho-L-threonyl-[protein] + ADP + H(+). Its function is as follows. Serine/threonine protein kinase that plays important roles in several processes including nuclear viral egress, viral replication or regulation of host cell cycle progression. Participates in the acquisition of tegument during virion morphogenesis in the nucleus. Redistributes the host nuclear lamina by phosphorylating cellular Lamins-A/C. Plays a role in viral DNA synthesis by phosphorylating the DNA polymerase processivity factor UL44. Stimulates host cell cycle to support viral DNA synthesis by phosphorylating host retinoblastoma/RB1 protein. Additional substrates have been identified including host EF1D or H2B. Also phosphorylates host SAMHD1 and thereby counteracts its antiviral effect by reducing its dNTP hydrolase activity. The protein is Serine/threonine protein kinase UL97 (UL97) of Homo sapiens (Human).